The following is a 456-amino-acid chain: Bifunctional protein GlmU (456 aa).

Positions 1–228 are pyrophosphorylase; the sequence is MPQNTLNTVI…SHLAAGVNNK (228 aa). UDP-N-acetyl-alpha-D-glucosamine is bound by residues 11–14, Lys25, Gln75, 80–81, 102–104, Gly138, Glu153, Asn168, and Asn226; these read LAAG, GT, and YGD. Asp104 is a binding site for Mg(2+). Asn226 contacts Mg(2+). The segment at 229 to 249 is linker; it reads RQLAELERIFQTEQAQELLKA. An N-acetyltransferase region spans residues 250–456; sequence GVTLRDPARF…GWMRPEKDKQ (207 aa). The UDP-N-acetyl-alpha-D-glucosamine site is built by Arg332 and Lys350. Catalysis depends on His362, which acts as the Proton acceptor. Tyr365 and Asn376 together coordinate UDP-N-acetyl-alpha-D-glucosamine. Acetyl-CoA contacts are provided by residues Ala379, 385–386, Ser404, Ala422, and Arg439; that span reads NY.

In the N-terminal section; belongs to the N-acetylglucosamine-1-phosphate uridyltransferase family. The protein in the C-terminal section; belongs to the transferase hexapeptide repeat family. Homotrimer. Requires Mg(2+) as cofactor.

It is found in the cytoplasm. The enzyme catalyses alpha-D-glucosamine 1-phosphate + acetyl-CoA = N-acetyl-alpha-D-glucosamine 1-phosphate + CoA + H(+). It catalyses the reaction N-acetyl-alpha-D-glucosamine 1-phosphate + UTP + H(+) = UDP-N-acetyl-alpha-D-glucosamine + diphosphate. It participates in nucleotide-sugar biosynthesis; UDP-N-acetyl-alpha-D-glucosamine biosynthesis; N-acetyl-alpha-D-glucosamine 1-phosphate from alpha-D-glucosamine 6-phosphate (route II): step 2/2. It functions in the pathway nucleotide-sugar biosynthesis; UDP-N-acetyl-alpha-D-glucosamine biosynthesis; UDP-N-acetyl-alpha-D-glucosamine from N-acetyl-alpha-D-glucosamine 1-phosphate: step 1/1. Its pathway is bacterial outer membrane biogenesis; LPS lipid A biosynthesis. Its function is as follows. Catalyzes the last two sequential reactions in the de novo biosynthetic pathway for UDP-N-acetylglucosamine (UDP-GlcNAc). The C-terminal domain catalyzes the transfer of acetyl group from acetyl coenzyme A to glucosamine-1-phosphate (GlcN-1-P) to produce N-acetylglucosamine-1-phosphate (GlcNAc-1-P), which is converted into UDP-GlcNAc by the transfer of uridine 5-monophosphate (from uridine 5-triphosphate), a reaction catalyzed by the N-terminal domain. This is Bifunctional protein GlmU from Neisseria gonorrhoeae (strain ATCC 700825 / FA 1090).